The sequence spans 537 residues: O-phosphoserine--tRNA(Cys) ligase (537 aa).

Substrate contacts are provided by residues His-186–Thr-188, Ser-231–Ser-233, Tyr-273–Tyr-274, and Asn-317.

The protein belongs to the class-II aminoacyl-tRNA synthetase family. O-phosphoseryl-tRNA(Cys) synthetase subfamily. In terms of assembly, homotetramer. Interacts with SepCysS.

The catalysed reaction is tRNA(Cys) + O-phospho-L-serine + ATP = O-phospho-L-seryl-tRNA(Cys) + AMP + diphosphate. Catalyzes the attachment of O-phosphoserine (Sep) to tRNA(Cys). The polypeptide is O-phosphoserine--tRNA(Cys) ligase (Methanococcus maripaludis (strain C7 / ATCC BAA-1331)).